The chain runs to 154 residues: 6,7-dimethyl-8-ribityllumazine synthase (154 aa).

5-amino-6-(D-ribitylamino)uracil is bound by residues Phe-22, 56–58, and 80–82; these read AFE and AVI. A (2S)-2-hydroxy-3-oxobutyl phosphate-binding site is contributed by 85–86; the sequence is ST. The Proton donor role is filled by His-88. Residue Phe-113 participates in 5-amino-6-(D-ribitylamino)uracil binding. Arg-127 provides a ligand contact to (2S)-2-hydroxy-3-oxobutyl phosphate.

The protein belongs to the DMRL synthase family.

It carries out the reaction (2S)-2-hydroxy-3-oxobutyl phosphate + 5-amino-6-(D-ribitylamino)uracil = 6,7-dimethyl-8-(1-D-ribityl)lumazine + phosphate + 2 H2O + H(+). The protein operates within cofactor biosynthesis; riboflavin biosynthesis; riboflavin from 2-hydroxy-3-oxobutyl phosphate and 5-amino-6-(D-ribitylamino)uracil: step 1/2. Functionally, catalyzes the formation of 6,7-dimethyl-8-ribityllumazine by condensation of 5-amino-6-(D-ribitylamino)uracil with 3,4-dihydroxy-2-butanone 4-phosphate. This is the penultimate step in the biosynthesis of riboflavin. In Clostridium kluyveri (strain NBRC 12016), this protein is 6,7-dimethyl-8-ribityllumazine synthase.